A 496-amino-acid chain; its full sequence is Cytochrome P450 71D180 (496 aa).

Residues 1–21 traverse the membrane as a helical; Signal-anchor for type II membrane protein segment; the sequence is MDISISWVVIIVFVLSYLILM. C435 contributes to the heme binding site. The tract at residues 471–496 is disordered; sequence MSETPGLSGPRKNPLIMIPTIHNPTS.

It belongs to the cytochrome P450 family. Requires heme as cofactor.

It localises to the membrane. The enzyme catalyses gamma-terpinene + 2 reduced [NADPH--hemoprotein reductase] + 2 O2 = carvacrol + 2 oxidized [NADPH--hemoprotein reductase] + 3 H2O + 2 H(+). The catalysed reaction is (4S)-limonene + reduced [NADPH--hemoprotein reductase] + O2 = (1S,5R)-carveol + oxidized [NADPH--hemoprotein reductase] + H2O + H(+). It catalyses the reaction (4R)-limonene + reduced [NADPH--hemoprotein reductase] + O2 = (1R,5S)-carveol + oxidized [NADPH--hemoprotein reductase] + H2O + H(+). The protein operates within secondary metabolite biosynthesis; terpenoid biosynthesis. Involved in the biosynthesis of phenolic monoterpenes natural products thymol and carvacrol which have a broad range of biological activities acting as antimicrobial compounds, insecticides, antioxidants and pharmaceutical agents. Catalyzes the C2-hydroxylation of gamma-terpinene to produce carvacrol. Mediates also the C6-hydroxylation of (4S)-limonene and (4R)-limonene to form carveol. This is Cytochrome P450 71D180 from Origanum majorana (Sweet marjoram).